We begin with the raw amino-acid sequence, 400 residues long: MAKAKFERTKPHVNIGTIGHVDHGKTTLTAAITKVLALKGKAQFMAYDQIDKAPEERERGITINTAHVEYETDARHYAHVDCPGHADYVKNMITGAAQMDGAILVVSAADGPMPQTREHILLARQVNVPYIVVFLNKVDMVDDPELIELVEMEVRELLSKYGYPGDEVPIVKGSALKALESTSQDPNAPEYQCILELMDAVDKYIPTPQRDIDKPFLMPIEDVFSITGRGTVVTGRVERGTLKTGEEVEIVGFAPEPRKTVVTGIEMFRKVLDEAVAGDNVGCLLRGIQKNEVERGQVLAKPGTIKPHTKFKAQVYVLTKEEGGRHTPFFNGYRPQFYFRTTDVTGTITLPEGVEMCMPGDNVEMTVELISPIAIESGLRFAIREGGRTVGAGSVTTIIE.

A tr-type G domain is found at 10-209 (KPHVNIGTIG…AVDKYIPTPQ (200 aa)). Residues 19–26 (GHVDHGKT) are G1. 19–26 (GHVDHGKT) lines the GTP pocket. Residue threonine 26 participates in Mg(2+) binding. Positions 60 to 64 (GITIN) are G2. Positions 81-84 (DCPG) are G3. GTP is bound by residues 81–85 (DCPGH) and 136–139 (NKVD). Residues 136 to 139 (NKVD) form a G4 region. The interval 174–176 (SAL) is G5.

Belongs to the TRAFAC class translation factor GTPase superfamily. Classic translation factor GTPase family. EF-Tu/EF-1A subfamily. Monomer.

Its subcellular location is the cytoplasm. It catalyses the reaction GTP + H2O = GDP + phosphate + H(+). Its function is as follows. GTP hydrolase that promotes the GTP-dependent binding of aminoacyl-tRNA to the A-site of ribosomes during protein biosynthesis. In Caldicellulosiruptor bescii (strain ATCC BAA-1888 / DSM 6725 / KCTC 15123 / Z-1320) (Anaerocellum thermophilum), this protein is Elongation factor Tu.